The primary structure comprises 457 residues: Cysteine--tRNA ligase (457 aa).

Cys28 contributes to the Zn(2+) binding site. A 'HIGH' region motif is present at residues 30–40; it reads PTVYDTAHIGN. Positions 212, 237, and 241 each coordinate Zn(2+). The 'KMSKS' region signature appears at 270 to 274; the sequence is KMSKS. Lys273 is an ATP binding site.

This sequence belongs to the class-I aminoacyl-tRNA synthetase family. In terms of assembly, monomer. Requires Zn(2+) as cofactor.

The protein resides in the cytoplasm. The catalysed reaction is tRNA(Cys) + L-cysteine + ATP = L-cysteinyl-tRNA(Cys) + AMP + diphosphate. The chain is Cysteine--tRNA ligase from Wolbachia sp. subsp. Drosophila simulans (strain wRi).